Consider the following 469-residue polypeptide: TKASVGFKAGVKEYKLTYYTPDYEPHDHDILAAFRVTPQPGVPPEEAGAAVAAESSTGTWTTVWTDGLTSLDRYKGRCYNIEPVAGEENQFIAYVAYPLDLFEEGSVTNMFTSIVGNVFGFKALRALRLEDLRIPPAYTKTFQGPPHGIQVERDKLNKYGRPLLGCTIKPKLGLSAKNYGRAVYECLRGGLDFTKDDENVNSQPFMRWRDRFLFCAEAIFKSQSETGEIKGHYLNATAGTCEEMIKRAVFARELGVPIVMHDYLTGGFTANTSLAHYCRDNGLLLHIHRAMHAVIDRQKNHGIHFRVLAKALRMSGGDHIHAGTVVGKLEGERDITLGFVDLLRDDFVEKDRSRGIYFTQPWVSLPGVIPVASGGIHVWHMPALTEIFGDDSVLQFGGGTLGHPWGNAPGAAANRVALEACVQARNEGRDLAREGNEIIRKASKWSPELAAACEVWKEIKFEFQAMDTL.

Residue K8 is modified to N6,N6,N6-trimethyllysine. N117 and T167 together coordinate substrate. Catalysis depends on K169, which acts as the Proton acceptor. Substrate is bound at residue K171. Residues K195, D197, and E198 each contribute to the Mg(2+) site. K195 is modified (N6-carboxylysine). Catalysis depends on H288, which acts as the Proton acceptor. The substrate site is built by R289, H321, and S373.

This sequence belongs to the RuBisCO large chain family. Type I subfamily. As to quaternary structure, heterohexadecamer of 8 large chains and 8 small chains; disulfide-linked. The disulfide link is formed within the large subunit homodimers. Requires Mg(2+) as cofactor. The disulfide bond which can form in the large chain dimeric partners within the hexadecamer appears to be associated with oxidative stress and protein turnover.

It localises to the plastid. The protein localises to the chloroplast. It carries out the reaction 2 (2R)-3-phosphoglycerate + 2 H(+) = D-ribulose 1,5-bisphosphate + CO2 + H2O. The catalysed reaction is D-ribulose 1,5-bisphosphate + O2 = 2-phosphoglycolate + (2R)-3-phosphoglycerate + 2 H(+). Its function is as follows. RuBisCO catalyzes two reactions: the carboxylation of D-ribulose 1,5-bisphosphate, the primary event in carbon dioxide fixation, as well as the oxidative fragmentation of the pentose substrate in the photorespiration process. Both reactions occur simultaneously and in competition at the same active site. This chain is Ribulose bisphosphate carboxylase large chain, found in Persicaria senticosa (Knotweed).